Consider the following 388-residue polypeptide: MAESNFVDYVKIYCRSGKGGRGSTHMRREKYCPNGGPDGGDGGRGGHIILRGNRNYWTLLHLKYDRHAMAGHGESGSKNRSFGKDGADKVIEVPCGTVVYNAETGEYLCDVTDDGQEVILLKGGRGGQGNSHFKTATRQAPRFAQPGEPMQEMTVIMELKLLADVGLVGFPNAGKSTLLSAISAAKPKIADYPFTTLEPNLGIVSYRDGKSFVMADIPGIIEGASQGKGLGLRFLRHIERNSLLLFMVPADSDDIRKEYEVLLNELRTFNPEMLDKQRVLAITKSDMLDQELMDEIEPTLPEGVPHIFISSVSGLGISVLKDILWEELNKESNKIEDIVHRPKDVTRLQQELKDMGEDEELDYEYEEDADDEDDDLDYEYEEEDWEEK.

The region spanning 4 to 162 (SNFVDYVKIY…MTVIMELKLL (159 aa)) is the Obg domain. Residues 163–329 (ADVGLVGFPN…LKDILWEELN (167 aa)) form the OBG-type G domain. GTP-binding positions include 169–176 (GFPNAGKS), 194–198 (FTTLE), 216–219 (DIPG), 283–286 (TKSD), and 310–312 (SSV). Residues serine 176 and threonine 196 each coordinate Mg(2+). The tract at residues 352–388 (LKDMGEDEELDYEYEEDADDEDDDLDYEYEEEDWEEK) is disordered. The segment covering 356-388 (GEDEELDYEYEEDADDEDDDLDYEYEEEDWEEK) has biased composition (acidic residues).

It belongs to the TRAFAC class OBG-HflX-like GTPase superfamily. OBG GTPase family. In terms of assembly, monomer. Mg(2+) is required as a cofactor.

It localises to the cytoplasm. An essential GTPase which binds GTP, GDP and possibly (p)ppGpp with moderate affinity, with high nucleotide exchange rates and a fairly low GTP hydrolysis rate. Plays a role in control of the cell cycle, stress response, ribosome biogenesis and in those bacteria that undergo differentiation, in morphogenesis control. The polypeptide is GTPase Obg (Bacteroides thetaiotaomicron (strain ATCC 29148 / DSM 2079 / JCM 5827 / CCUG 10774 / NCTC 10582 / VPI-5482 / E50)).